We begin with the raw amino-acid sequence, 502 residues long: Serine carboxypeptidase-like 40 (502 aa).

An N-terminal signal peptide occupies residues 1-24 (MRKGQGYSYSVIASVLVLLCVVVS). Residues Asn103 and Asn187 are each glycosylated (N-linked (GlcNAc...) asparagine). 3 disulfides stabilise this stretch: Cys136–Cys384, Cys293–Cys307, and Cys331–Cys352. Residue Ser229 is part of the active site. 2 N-linked (GlcNAc...) asparagine glycosylation sites follow: Asn333 and Asn373. The active site involves Asp420. Residue Asn436 is glycosylated (N-linked (GlcNAc...) asparagine). The active site involves His473.

It belongs to the peptidase S10 family. In terms of tissue distribution, expressed in roots, leaves, flowers and siliques.

It is found in the secreted. Functionally, probable carboxypeptidase. In Arabidopsis thaliana (Mouse-ear cress), this protein is Serine carboxypeptidase-like 40 (SCPL40).